We begin with the raw amino-acid sequence, 444 residues long: Dihydroorotate dehydrogenase (quinone), mitochondrial (444 aa).

The chain crosses the membrane as a helical span at residues 34 to 56 (GGASRYIIGTASVLVGAMAGFYI). FMN is bound by residues 124–128 (AGLDK) and Thr-148. Substrate is bound at residue Lys-128. 173–177 (NRYGF) contributes to the substrate binding site. FMN contacts are provided by Asn-220 and Asn-250. 250–255 (NVSSPN) is a substrate binding site. Ser-253 acts as the Nucleophile in catalysis. FMN contacts are provided by Lys-301 and Ser-329. Residue 330-331 (NT) coordinates substrate. Residues Gly-355, Gly-385, and 406–407 (YT) each bind FMN.

It belongs to the dihydroorotate dehydrogenase family. Type 2 subfamily. FMN is required as a cofactor.

It localises to the mitochondrion inner membrane. The catalysed reaction is (S)-dihydroorotate + a quinone = orotate + a quinol. Its pathway is pyrimidine metabolism; UMP biosynthesis via de novo pathway; orotate from (S)-dihydroorotate (quinone route): step 1/1. Catalyzes the conversion of dihydroorotate to orotate with quinone as electron acceptor. This chain is Dihydroorotate dehydrogenase (quinone), mitochondrial (URA9), found in Eremothecium gossypii (strain ATCC 10895 / CBS 109.51 / FGSC 9923 / NRRL Y-1056) (Yeast).